The primary structure comprises 198 residues: FMN-dependent NADH:quinone oxidoreductase 2 (198 aa).

136–139 (SRGG) lines the FMN pocket.

It belongs to the azoreductase type 1 family. As to quaternary structure, homodimer. It depends on FMN as a cofactor.

It carries out the reaction 2 a quinone + NADH + H(+) = 2 a 1,4-benzosemiquinone + NAD(+). The enzyme catalyses N,N-dimethyl-1,4-phenylenediamine + anthranilate + 2 NAD(+) = 2-(4-dimethylaminophenyl)diazenylbenzoate + 2 NADH + 2 H(+). Quinone reductase that provides resistance to thiol-specific stress caused by electrophilic quinones. Functionally, also exhibits azoreductase activity. Catalyzes the reductive cleavage of the azo bond in aromatic azo compounds to the corresponding amines. In Clostridium perfringens (strain 13 / Type A), this protein is FMN-dependent NADH:quinone oxidoreductase 2.